A 354-amino-acid polypeptide reads, in one-letter code: Alternative oxidase, mitochondrial (354 aa).

A mitochondrion-targeting transit peptide spans 1 to 64 (MNSMSTTGPI…RFISSTPQSQ (64 aa)). The helical transmembrane segment at 153-173 (FVFLESVAGVPGMVGGMLRHL) threads the bilayer. Fe cation contacts are provided by glutamate 157, glutamate 196, and histidine 199. Residues 215-235 (LMVLGAQGVFFNGFFLSYLIS) form a helical membrane-spanning segment. Residues glutamate 247, glutamate 302, and histidine 305 each coordinate Fe cation. The tract at residues 333-354 (KPHPGKGIKHLKTTGWEREEVV) is disordered. Positions 335–344 (HPGKGIKHLK) are enriched in basic residues.

This sequence belongs to the alternative oxidase family. Fe cation is required as a cofactor.

The protein localises to the mitochondrion inner membrane. Functionally, catalyzes cyanide-resistant oxygen consumption. May increase respiration when the cytochrome respiratory pathway is restricted, or in response to low temperatures. This is Alternative oxidase, mitochondrial (alxA) from Emericella nidulans (strain FGSC A4 / ATCC 38163 / CBS 112.46 / NRRL 194 / M139) (Aspergillus nidulans).